Reading from the N-terminus, the 237-residue chain is Thrombin-like enzyme agkihpin-1 (237 aa).

Residue Met-1 is a propeptide. The region spanning 2–228 (ILGDDECNIN…HLDWIENIIA (227 aa)) is the Peptidase S1 domain. Cys-27 and Cys-43 are disulfide-bonded. The active-site Charge relay system is the His-42. Residue Asn-80 is glycosylated (N-linked (GlcNAc...) asparagine). Asp-87 (charge relay system) is an active-site residue. Disulfide bonds link Cys-119-Cys-189, Cys-151-Cys-168, and Cys-179-Cys-204. The Charge relay system role is filled by Ser-183.

Belongs to the peptidase S1 family. Snake venom subfamily. Expressed by the venom gland.

Its subcellular location is the secreted. The hydrolysis of TAMe (tosyl-arginine methyl ester) substrate is activated by Ca(2+), Fe(3+), Mg(2+) and Zn(2+), and inhibited by EDTA, PMSF and DTT. Its function is as follows. Thrombin-like enzyme that shows fibrinogenolytic activity against bovine fibrinogen alpha and beta chains, but not gamma chain. Hydrolyzes fibrin. Enhances ADP-induced human platelet aggregation. Has arginine esterase activity for TAMe (tosyl-arginine methyl ester) substrate. Reduces thrombin-induced thrombosis. Does not have hemorrhagic activity. Reduces the motility of human liver cancer HepG2 cells in a wound-healing assay. The chain is Thrombin-like enzyme agkihpin-1 from Gloydius halys (Chinese water mocassin).